The primary structure comprises 360 residues: 3-isopropylmalate dehydrogenase (360 aa).

An NAD(+)-binding site is contributed by 76-89 (GPKWDTIERDIRPE). 4 residues coordinate substrate: arginine 96, arginine 106, arginine 134, and aspartate 224. Positions 224, 248, and 252 each coordinate Mg(2+). Residue 282-294 (GSAPDIAGKGIAN) coordinates NAD(+).

The protein belongs to the isocitrate and isopropylmalate dehydrogenases family. LeuB type 1 subfamily. As to quaternary structure, homodimer. Mg(2+) serves as cofactor. The cofactor is Mn(2+).

It localises to the cytoplasm. It carries out the reaction (2R,3S)-3-isopropylmalate + NAD(+) = 4-methyl-2-oxopentanoate + CO2 + NADH. Its pathway is amino-acid biosynthesis; L-leucine biosynthesis; L-leucine from 3-methyl-2-oxobutanoate: step 3/4. Its function is as follows. Catalyzes the oxidation of 3-carboxy-2-hydroxy-4-methylpentanoate (3-isopropylmalate) to 3-carboxy-4-methyl-2-oxopentanoate. The product decarboxylates to 4-methyl-2 oxopentanoate. The chain is 3-isopropylmalate dehydrogenase from Pseudomonas fluorescens (strain Pf0-1).